The sequence spans 344 residues: Melanocyte-stimulating hormone receptor (344 aa).

Residues 1-37 (MPMQGAQRKLLGSLNSTPTATSNPGLAANHTGAPCLE) are Extracellular-facing. The N-linked (GlcNAc...) asparagine glycan is linked to asparagine 29. Residues 38–63 (VSIPDGLFLSLGLVSLVENVLVVAAI) form a helical membrane-spanning segment. Over 64–72 (AKNRNLHSS) the chain is Cytoplasmic. The chain crosses the membrane as a helical span at residues 73 to 93 (MYXFICCLALSDLLVSGSNML). At 94-118 (ETAIILLLEAGTLATRASVVQQLHN) the chain is on the extracellular side. The helical transmembrane segment at 119 to 140 (TIDVLTCSSMLCSLCFLGAIAV) threads the bilayer. Topologically, residues 141–163 (DRYISIFYALRYHSIMTLPRAQR) are cytoplasmic. Residues 164–183 (AIAAIWVASVLSSTLFITYY) traverse the membrane as a helical segment. The Extracellular portion of the chain corresponds to 184 to 191 (DHAAVLLC). Residues 192–211 (LVVFFLAMLVLMAVLYVHML) traverse the membrane as a helical segment. Topologically, residues 212 to 240 (ARACQHAQGIIRLHNRQLPAHKGFGLRGA) are cytoplasmic. Residues 241-266 (ATLTILLGIFFLCWGPFFLHLTLVVF) traverse the membrane as a helical segment. Residues 267 to 279 (CPQHLTCNCIFKN) lie on the Extracellular side of the membrane. A helical transmembrane segment spans residues 280 to 300 (FKVFLTLIICNTIIDPLIYAF). The Cytoplasmic portion of the chain corresponds to 301–344 (RSQELRRTLKEVLLCSSWPGCWAEGGGDSVWPGSCVTLRGPLPP). Residue cysteine 315 is the site of S-palmitoyl cysteine attachment.

This sequence belongs to the G-protein coupled receptor 1 family. In terms of assembly, interacts with MGRN1, but does not undergo MGRN1-mediated ubiquitination; this interaction competes with GNAS-binding and thus inhibits agonist-induced cAMP production. Interacts with OPN3; the interaction results in a decrease in MC1R-mediated cAMP signaling and ultimately a decrease in melanin production in melanocytes.

Its subcellular location is the cell membrane. In terms of biological role, receptor for MSH (alpha, beta and gamma) and ACTH. The activity of this receptor is mediated by G proteins which activate adenylate cyclase. Mediates melanogenesis, the production of eumelanin (black/brown) and phaeomelanin (red/yellow), via regulation of cAMP signaling in melanocytes. This Callithrix geoffroyi (Geoffroy's marmoset) protein is Melanocyte-stimulating hormone receptor (MC1R).